The following is a 244-amino-acid chain: tRNA pseudouridine synthase B (244 aa).

D46 serves as the catalytic Nucleophile.

The protein belongs to the pseudouridine synthase TruB family. Type 1 subfamily.

It catalyses the reaction uridine(55) in tRNA = pseudouridine(55) in tRNA. Functionally, responsible for synthesis of pseudouridine from uracil-55 in the psi GC loop of transfer RNAs. The polypeptide is tRNA pseudouridine synthase B (Bordetella bronchiseptica (strain ATCC BAA-588 / NCTC 13252 / RB50) (Alcaligenes bronchisepticus)).